Consider the following 141-residue polypeptide: 3-hydroxyacyl-[acyl-carrier-protein] dehydratase FabZ (141 aa).

Histidine 48 is an active-site residue.

This sequence belongs to the thioester dehydratase family. FabZ subfamily.

The protein resides in the cytoplasm. The enzyme catalyses a (3R)-hydroxyacyl-[ACP] = a (2E)-enoyl-[ACP] + H2O. Functionally, involved in unsaturated fatty acids biosynthesis. Catalyzes the dehydration of short chain beta-hydroxyacyl-ACPs and long chain saturated and unsaturated beta-hydroxyacyl-ACPs. The sequence is that of 3-hydroxyacyl-[acyl-carrier-protein] dehydratase FabZ from Bacillus velezensis (strain DSM 23117 / BGSC 10A6 / LMG 26770 / FZB42) (Bacillus amyloliquefaciens subsp. plantarum).